Here is a 427-residue protein sequence, read N- to C-terminus: Enolase 1 (427 aa).

A (2R)-2-phosphoglycerate-binding site is contributed by Gln-162. Residue Glu-204 is the Proton donor of the active site. Residues Asp-241, Glu-285, and Asp-312 each coordinate Mg(2+). Lys-337, Arg-366, Ser-367, and Lys-388 together coordinate (2R)-2-phosphoglycerate. The active-site Proton acceptor is Lys-337.

The protein belongs to the enolase family. Mg(2+) serves as cofactor.

It localises to the cytoplasm. The protein resides in the secreted. Its subcellular location is the cell surface. The catalysed reaction is (2R)-2-phosphoglycerate = phosphoenolpyruvate + H2O. It functions in the pathway carbohydrate degradation; glycolysis; pyruvate from D-glyceraldehyde 3-phosphate: step 4/5. Catalyzes the reversible conversion of 2-phosphoglycerate (2-PG) into phosphoenolpyruvate (PEP). It is essential for the degradation of carbohydrates via glycolysis. The polypeptide is Enolase 1 (Chlorobaculum tepidum (strain ATCC 49652 / DSM 12025 / NBRC 103806 / TLS) (Chlorobium tepidum)).